Here is a 396-residue protein sequence, read N- to C-terminus: MAKKIVSDLDLKGKVVLERADFNVPIKDGEITNDNRIVQALPTIEYIIEQGGKLVLFSHLGKVKEESDKEGLSLKPVAENLSKKLGKEVIFVPETRGEKLETAIENLNEGDVLLVENTRFEDLDGKKESKNDPELGKYWASLGDVFVNDAFGTAHREHASNVGISTHLETAAGYLMEKEIKFIGGVVNDPQKPVVAILGGAKVSDKINVIKNLVNIADKILIGGGMAYTFIKAQGKEIGLSLLEEDKIDFAKDLLENNGDQIVLPVDCKIAKEFSNDAKITEVSINEIPSDQEAMDIGPKTVELFNKELQGAHTVVWNGPMGVFEFSNFAKGTIGVCESIAKLEDATTIIGGGDSAAAAISLGFEDDFTHISTGGGASLEYLEGKELPGIKAINDK.

Residues 21 to 23 (DFN), Arg36, 59 to 62 (HLGK), Arg119, and Arg156 each bind substrate. Residues Lys206, Glu325, and 352–355 (GGDS) contribute to the ATP site.

Belongs to the phosphoglycerate kinase family. Monomer.

It is found in the cytoplasm. The enzyme catalyses (2R)-3-phosphoglycerate + ATP = (2R)-3-phospho-glyceroyl phosphate + ADP. Its pathway is carbohydrate degradation; glycolysis; pyruvate from D-glyceraldehyde 3-phosphate: step 2/5. The polypeptide is Phosphoglycerate kinase (Staphylococcus epidermidis (strain ATCC 35984 / DSM 28319 / BCRC 17069 / CCUG 31568 / BM 3577 / RP62A)).